Reading from the N-terminus, the 319-residue chain is ADP-L-glycero-D-manno-heptose-6-epimerase (319 aa).

Residues 10 to 11 (FI), 31 to 32 (DD), K38, K53, and 75 to 79 (EGACS) contribute to the NADP(+) site. The active-site Proton acceptor is Y139. K143 lines the NADP(+) pocket. N168 lines the substrate pocket. Residues V169 and K177 each contribute to the NADP(+) site. Catalysis depends on K177, which acts as the Proton acceptor. Substrate-binding positions include S179, H186, 200–203 (FEGA), R213, and Y281.

Belongs to the NAD(P)-dependent epimerase/dehydratase family. HldD subfamily. As to quaternary structure, homopentamer. NADP(+) is required as a cofactor.

The catalysed reaction is ADP-D-glycero-beta-D-manno-heptose = ADP-L-glycero-beta-D-manno-heptose. It functions in the pathway nucleotide-sugar biosynthesis; ADP-L-glycero-beta-D-manno-heptose biosynthesis; ADP-L-glycero-beta-D-manno-heptose from D-glycero-beta-D-manno-heptose 7-phosphate: step 4/4. Functionally, catalyzes the interconversion between ADP-D-glycero-beta-D-manno-heptose and ADP-L-glycero-beta-D-manno-heptose via an epimerization at carbon 6 of the heptose. In Aromatoleum aromaticum (strain DSM 19018 / LMG 30748 / EbN1) (Azoarcus sp. (strain EbN1)), this protein is ADP-L-glycero-D-manno-heptose-6-epimerase.